A 94-amino-acid polypeptide reads, in one-letter code: Co-chaperonin GroES (94 aa).

Belongs to the GroES chaperonin family. In terms of assembly, heptamer of 7 subunits arranged in a ring. Interacts with the chaperonin GroEL.

The protein localises to the cytoplasm. Functionally, together with the chaperonin GroEL, plays an essential role in assisting protein folding. The GroEL-GroES system forms a nano-cage that allows encapsulation of the non-native substrate proteins and provides a physical environment optimized to promote and accelerate protein folding. GroES binds to the apical surface of the GroEL ring, thereby capping the opening of the GroEL channel. This is Co-chaperonin GroES from Clostridium botulinum.